A 401-amino-acid polypeptide reads, in one-letter code: Acetate kinase (401 aa).

A Mg(2+)-binding site is contributed by N7. K14 lines the ATP pocket. R90 serves as a coordination point for substrate. D147 acts as the Proton donor/acceptor in catalysis. ATP contacts are provided by residues 207-211 (HLGNG), 282-284 (DFR), and 330-334 (GVGEN). Position 383 (E383) interacts with Mg(2+).

Belongs to the acetokinase family. In terms of assembly, homodimer. The cofactor is Mg(2+). Requires Mn(2+) as cofactor.

The protein localises to the cytoplasm. The enzyme catalyses acetate + ATP = acetyl phosphate + ADP. Its pathway is metabolic intermediate biosynthesis; acetyl-CoA biosynthesis; acetyl-CoA from acetate: step 1/2. Catalyzes the formation of acetyl phosphate from acetate and ATP. Can also catalyze the reverse reaction. The protein is Acetate kinase of Clostridium novyi (strain NT).